A 197-amino-acid chain; its full sequence is dITP/XTP pyrophosphatase (197 aa).

Residue 8 to 13 (TGNQGK) participates in substrate binding. D69 functions as the Proton acceptor in the catalytic mechanism. Residue D69 coordinates Mg(2+). Residues S70, 154–157 (FGYD), K177, and 182–183 (HR) each bind substrate.

This sequence belongs to the HAM1 NTPase family. In terms of assembly, homodimer. Requires Mg(2+) as cofactor.

The enzyme catalyses XTP + H2O = XMP + diphosphate + H(+). It carries out the reaction dITP + H2O = dIMP + diphosphate + H(+). It catalyses the reaction ITP + H2O = IMP + diphosphate + H(+). Its function is as follows. Pyrophosphatase that catalyzes the hydrolysis of nucleoside triphosphates to their monophosphate derivatives, with a high preference for the non-canonical purine nucleotides XTP (xanthosine triphosphate), dITP (deoxyinosine triphosphate) and ITP. Seems to function as a house-cleaning enzyme that removes non-canonical purine nucleotides from the nucleotide pool, thus preventing their incorporation into DNA/RNA and avoiding chromosomal lesions. This Photobacterium profundum (strain SS9) protein is dITP/XTP pyrophosphatase.